Consider the following 460-residue polypeptide: Cysteine--tRNA ligase (460 aa).

Cys28 provides a ligand contact to Zn(2+). Positions 30 to 40 match the 'HIGH' region motif; the sequence is VTIYDLCHIGH. 3 residues coordinate Zn(2+): Cys209, His234, and Glu238. The 'KMSKS' region signature appears at 266 to 270; it reads KMSKS. Lys269 contributes to the ATP binding site.

Belongs to the class-I aminoacyl-tRNA synthetase family. In terms of assembly, monomer. Zn(2+) is required as a cofactor.

The protein resides in the cytoplasm. The enzyme catalyses tRNA(Cys) + L-cysteine + ATP = L-cysteinyl-tRNA(Cys) + AMP + diphosphate. This Vibrio vulnificus (strain YJ016) protein is Cysteine--tRNA ligase.